We begin with the raw amino-acid sequence, 620 residues long: Cryptochrome-1 (620 aa).

The Photolyase/cryptochrome alpha/beta domain occupies 3–132 (VNAVHWFRKG…EVIVRISHTL (130 aa)). 3 consecutive short sequence motifs (LIR) follow at residues 50 to 54 (NRWRF), 82 to 87 (DVFPRL), and 151 to 156 (KRFQTL). Position 252 (S252) interacts with FAD. 4 short sequence motifs (LIR) span residues 255-260 (LRFGCL), 271-276 (DLYKKV), 285-290 (SLYGQL), and 335-339 (TGFPW). Q289 contributes to the FAD binding site. H355 provides a ligand contact to FAD. The short motif at 379–384 (KVFEEL) is the LIR 8 element. Residue 387 to 389 (DAD) coordinates FAD. Short sequence motifs (LIR) lie at residues 395-400 (GSWMWL), 411-416 (HCYCPV), 430-435 (RRYLPV), 486-491 (QIYQQL), and 492-497 (SRYRGL). A disordered region spans residues 592–620 (GTGISAGKRPNPEEETQSVGPKVQRQSTN).

It belongs to the DNA photolyase class-1 family. Component of the circadian core oscillator, which includes the CRY proteins, CLOCK or NPAS2, BMAL1 or BMAL2, CSNK1E, and the PER proteins. The cofactor is FAD. (6R)-5,10-methylene-5,6,7,8-tetrahydrofolate serves as cofactor. Expressed in the retina. High levels found in ganglion cells of the retina.

Its subcellular location is the cytoplasm. It localises to the nucleus. Transcriptional repressor which forms a core component of the circadian clock. The circadian clock, an internal time-keeping system, regulates various physiological processes through the generation of approximately 24 hour circadian rhythms in gene expression, which are translated into rhythms in metabolism and behavior. It is derived from the Latin roots 'circa' (about) and 'diem' (day) and acts as an important regulator of a wide array of physiological functions including metabolism, sleep, body temperature, blood pressure, endocrine, immune, cardiovascular, and renal function. Consists of two major components: the central clock, residing in the suprachiasmatic nucleus (SCN) of the brain, and the peripheral clocks that are present in nearly every tissue and organ system. Both the central and peripheral clocks can be reset by environmental cues, also known as Zeitgebers (German for 'timegivers'). The predominant Zeitgeber for the central clock is light, which is sensed by retina and signals directly to the SCN. The central clock entrains the peripheral clocks through neuronal and hormonal signals, body temperature and feeding-related cues, aligning all clocks with the external light/dark cycle. Circadian rhythms allow an organism to achieve temporal homeostasis with its environment at the molecular level by regulating gene expression to create a peak of protein expression once every 24 hours to control when a particular physiological process is most active with respect to the solar day. Transcription and translation of core clock components (CLOCK, NPAS2, BMAL1, BMAL2, PER1, PER2, PER3, CRY1 and CRY2) plays a critical role in rhythm generation, whereas delays imposed by post-translational modifications (PTMs) are important for determining the period (tau) of the rhythms (tau refers to the period of a rhythm and is the length, in time, of one complete cycle). A diurnal rhythm is synchronized with the day/night cycle, while the ultradian and infradian rhythms have a period shorter and longer than 24 hours, respectively. Disruptions in the circadian rhythms contribute to the pathology of cardiovascular diseases, cancer, metabolic syndromes and aging. A transcription/translation feedback loop (TTFL) forms the core of the molecular circadian clock mechanism. Transcription factors, CLOCK or NPAS2 and BMAL1 or BMAL2, form the positive limb of the feedback loop, act in the form of a heterodimer and activate the transcription of core clock genes and clock-controlled genes (involved in key metabolic processes), harboring E-box elements (5'-CACGTG-3') within their promoters. The core clock genes: PER1/2/3 and CRY1/2 which are transcriptional repressors form the negative limb of the feedback loop and interact with the CLOCK|NPAS2-BMAL1|BMAL2 heterodimer inhibiting its activity and thereby negatively regulating their own expression. This heterodimer also activates nuclear receptors NR1D1, NR1D2, RORA, RORB and RORG, which form a second feedback loop and which activate and repress BMAL1 transcription, respectively. CRY1 and CRY2 have redundant functions but also differential and selective contributions at least in defining the pace of the SCN circadian clock and its circadian transcriptional outputs. More potent transcriptional repressor in cerebellum and liver than CRY2, though more effective in lengthening the period of the SCN oscillator. On its side, CRY2 seems to play a critical role in tuning SCN circadian period by opposing the action of CRY1. With CRY2, is dispensable for circadian rhythm generation but necessary for the development of intercellular networks for rhythm synchrony. Capable of translocating circadian clock core proteins such as PER proteins to the nucleus. Interacts with CLOCK:BMAL1 independently of PER proteins and is found at CLOCK:BMAL1-bound sites, suggesting that CRY may act as a molecular gatekeeper to maintain CLOCK:BMAL1 in a poised and repressed state until the proper time for transcriptional activation. The polypeptide is Cryptochrome-1 (CRY1) (Sylvia borin (Garden warbler)).